The chain runs to 393 residues: Acetyl-CoA acetyltransferase (393 aa).

Cysteine 90 (acyl-thioester intermediate) is an active-site residue. Residues histidine 349 and cysteine 379 each act as proton acceptor in the active site.

The protein belongs to the thiolase-like superfamily. Thiolase family. Homotetramer.

It is found in the cytoplasm. The catalysed reaction is 2 acetyl-CoA = acetoacetyl-CoA + CoA. It functions in the pathway biopolymer metabolism; poly-(R)-3-hydroxybutanoate biosynthesis. The protein operates within metabolic intermediate biosynthesis; (R)-mevalonate biosynthesis; (R)-mevalonate from acetyl-CoA: step 1/3. In Rhizobium meliloti (strain 1021) (Ensifer meliloti), this protein is Acetyl-CoA acetyltransferase.